A 556-amino-acid chain; its full sequence is CDP-diacylglycerol--glycerol-3-phosphate 3-phosphatidyltransferase, mitochondrial (556 aa).

Residues 1 to 28 (MAVAAAAAAGPVFWRRLLGLLPGRPGLA) constitute a mitochondrion transit peptide. A Phosphoserine modification is found at serine 49. ATP is bound at residue 124-131 (ASLYLGTG). PLD phosphodiesterase domains are found at residues 215–241 (TIGL…SDSY) and 460–493 (RGWT…GYRS). Residues histidine 220, lysine 222, and aspartate 227 contribute to the active site.

The protein belongs to the CDP-alcohol phosphatidyltransferase class-II family.

Its subcellular location is the mitochondrion. It catalyses the reaction a CDP-1,2-diacyl-sn-glycerol + sn-glycerol 3-phosphate = a 1,2-diacyl-sn-glycero-3-phospho-(1'-sn-glycero-3'-phosphate) + CMP + H(+). It participates in phospholipid metabolism; phosphatidylglycerol biosynthesis; phosphatidylglycerol from CDP-diacylglycerol: step 1/2. With respect to regulation, activated by calcium and magnesium and inhibited by other bivalent cations. In terms of biological role, functions in the biosynthesis of the anionic phospholipids phosphatidylglycerol and cardiolipin. The polypeptide is CDP-diacylglycerol--glycerol-3-phosphate 3-phosphatidyltransferase, mitochondrial (PGS1) (Pongo abelii (Sumatran orangutan)).